Consider the following 225-residue polypeptide: Membrane protein (225 aa).

Residues Met1–Glu20 lie on the Virion surface side of the membrane. N-linked (GlcNAc...) asparagine; by host glycans are attached at residues Asn3 and Asn6. The helical transmembrane segment at Tyr21–Ala41 threads the bilayer. At Thr42–Lys51 the chain is on the intravirion side. A helical transmembrane segment spans residues Met52–Tyr72. Residues Pro73–Gly77 lie on the Virion surface side of the membrane. The helical transmembrane segment at Gly78–Ile98 threads the bilayer. The Intravirion segment spans residues Gln99–Thr225.

This sequence belongs to the gammacoronaviruses M protein family. Homomultimer. Interacts with envelope E protein in the budding compartment of the host cell, which is located between endoplasmic reticulum and the Golgi complex. Forms a complex with HE and S proteins. Interacts with nucleocapsid N protein. This interaction probably participates in RNA packaging into the virus.

The protein localises to the virion membrane. It is found in the host Golgi apparatus membrane. Component of the viral envelope that plays a central role in virus morphogenesis and assembly via its interactions with other viral proteins. In Gallus gallus (Chicken), this protein is Membrane protein.